The primary structure comprises 731 residues: DNA topoisomerase 1 (731 aa).

The Toprim domain maps to 17–130 (KHLVIVESPA…KRIVFNEITP (114 aa)). 2 residues coordinate Mg(2+): Glu-23 and Asp-96. Residues 144–569 (DTAKVNAQKA…DFYPAFSEKV (426 aa)) enclose the Topo IA-type catalytic domain. The segment at 178–183 (SAGRVQ) is interaction with DNA. The O-(5'-phospho-DNA)-tyrosine intermediate role is filled by Tyr-312. C4-type zinc fingers lie at residues 591–617 (CSQCGDTMVKKLGRFGFFLACGKFPEC), 628–657 (CPRPACDGNIVGKKTRGRKEFYGCTRFPVC), and 670–696 (CPQCRCFLVEKSNRRVGTYTACVNPEC).

Belongs to the type IA topoisomerase family. Monomer. Requires Mg(2+) as cofactor.

It carries out the reaction ATP-independent breakage of single-stranded DNA, followed by passage and rejoining.. Releases the supercoiling and torsional tension of DNA, which is introduced during the DNA replication and transcription, by transiently cleaving and rejoining one strand of the DNA duplex. Introduces a single-strand break via transesterification at a target site in duplex DNA. The scissile phosphodiester is attacked by the catalytic tyrosine of the enzyme, resulting in the formation of a DNA-(5'-phosphotyrosyl)-enzyme intermediate and the expulsion of a 3'-OH DNA strand. The free DNA strand then undergoes passage around the unbroken strand, thus removing DNA supercoils. Finally, in the religation step, the DNA 3'-OH attacks the covalent intermediate to expel the active-site tyrosine and restore the DNA phosphodiester backbone. The protein is DNA topoisomerase 1 of Treponema pallidum (strain Nichols).